The chain runs to 129 residues: Small ribosomal subunit protein uS11 (129 aa).

Belongs to the universal ribosomal protein uS11 family. As to quaternary structure, part of the 30S ribosomal subunit. Interacts with proteins S7 and S18. Binds to IF-3.

Its function is as follows. Located on the platform of the 30S subunit, it bridges several disparate RNA helices of the 16S rRNA. Forms part of the Shine-Dalgarno cleft in the 70S ribosome. The protein is Small ribosomal subunit protein uS11 of Thermosipho melanesiensis (strain DSM 12029 / CIP 104789 / BI429).